A 29-amino-acid chain; its full sequence is Dermaseptin-J6 (29 aa).

Residue Val-29 is modified to Valine amide.

As to expression, expressed by the skin glands.

The protein resides in the secreted. Has antimicrobial activity. The sequence is that of Dermaseptin-J6 from Phasmahyla jandaia (Jandaia leaf frog).